The sequence spans 270 residues: MIOREX complex component 3 (270 aa).

The transit peptide at Met-1–Val-12 directs the protein to the mitochondrion.

Associates with the mitochondrial ribosome.

Its subcellular location is the mitochondrion. Its function is as follows. Component of MIOREX complexes, large expressome-like assemblies of ribosomes with factors involved in all the steps of post-transcriptional gene expression. In Saccharomyces cerevisiae (strain ATCC 204508 / S288c) (Baker's yeast), this protein is MIOREX complex component 3.